The primary structure comprises 204 residues: Altered inheritance of mitochondria protein 20 (204 aa).

Residues 6–26 (VAVGTAVGIPIAVGVIIALIF) traverse the membrane as a helical segment.

The protein belongs to the SKG1 family.

The protein localises to the vacuole membrane. Involved in cell cycle progression and surviving DNA damage. The polypeptide is Altered inheritance of mitochondria protein 20 (AIM20) (Saccharomyces cerevisiae (strain JAY291) (Baker's yeast)).